The sequence spans 115 residues: SPbeta prophage-derived uncharacterized protein YoqS (115 aa).

The sequence is that of SPbeta prophage-derived uncharacterized protein YoqS (yoqS) from Bacillus subtilis (strain 168).